Here is a 243-residue protein sequence, read N- to C-terminus: 23S rRNA (guanosine-2'-O-)-methyltransferase RlmB (243 aa).

Residues Gly-196, Ile-216, and Leu-225 each contribute to the S-adenosyl-L-methionine site.

This sequence belongs to the class IV-like SAM-binding methyltransferase superfamily. RNA methyltransferase TrmH family. RlmB subfamily. As to quaternary structure, homodimer.

The protein resides in the cytoplasm. It catalyses the reaction guanosine(2251) in 23S rRNA + S-adenosyl-L-methionine = 2'-O-methylguanosine(2251) in 23S rRNA + S-adenosyl-L-homocysteine + H(+). Functionally, specifically methylates the ribose of guanosine 2251 in 23S rRNA. This is 23S rRNA (guanosine-2'-O-)-methyltransferase RlmB from Salmonella typhi.